A 313-amino-acid chain; its full sequence is Ribosomal RNA small subunit methyltransferase H (313 aa).

S-adenosyl-L-methionine is bound by residues 35–37 (GGH), D55, F80, D102, and Q109.

Belongs to the methyltransferase superfamily. RsmH family.

It is found in the cytoplasm. It carries out the reaction cytidine(1402) in 16S rRNA + S-adenosyl-L-methionine = N(4)-methylcytidine(1402) in 16S rRNA + S-adenosyl-L-homocysteine + H(+). In terms of biological role, specifically methylates the N4 position of cytidine in position 1402 (C1402) of 16S rRNA. This is Ribosomal RNA small subunit methyltransferase H from Shewanella frigidimarina (strain NCIMB 400).